The chain runs to 64 residues: Potassium channel toxin kappa-KTx 3.4 (64 aa).

The N-terminal stretch at 1-26 (MKSTLMTASLLILVLLSIIDYASVYA) is a signal peptide. Residues 27 to 36 (EFIDSEISLE) constitute a propeptide that is removed on maturation. 2 disulfide bridges follow: cysteine 43–cysteine 61 and cysteine 47–cysteine 57.

The protein belongs to the short scorpion toxin superfamily. Potassium channel inhibitor kappa-KTx family. Kappa-KTx 3 subfamily. Expressed by the venom gland.

The protein resides in the secreted. Its function is as follows. Potassium channel inhibitor (Kv). This is Potassium channel toxin kappa-KTx 3.4 from Heterometrus petersii (Asian forest scorpion).